Here is a 238-residue protein sequence, read N- to C-terminus: Ribonuclease PH (238 aa).

Residues arginine 86 and 124-126 (GTR) contribute to the phosphate site.

The protein belongs to the RNase PH family. As to quaternary structure, homodimer. Has a tendency to aggregate into multimers. Mg(2+) serves as cofactor.

It catalyses the reaction tRNA(n+1) + phosphate = tRNA(n) + a ribonucleoside 5'-diphosphate. Phosphorolytic exoribonuclease that plays an important role in tRNA 3'-end maturation; has no activity on a tRNA precursor with a 3'-terminal phosphate group. In vitro is freely reversible, adds nucleotides to the ends of RNA molecules by using nucleoside diphosphates as substrates, but this may not be physiologically important. Probably plays a role in initiation of 16S rRNA degradation (leading to ribosome degradation) during starvation. This is Ribonuclease PH from Escherichia coli (strain K12 / MC4100 / BW2952).